A 382-amino-acid chain; its full sequence is Pyrimidine monooxygenase RutA (382 aa).

Residues 68–69, asparagine 134, glutamate 143, 159–160, and serine 209 each bind FMN; these read IK and RY.

This sequence belongs to the NtaA/SnaA/DszA monooxygenase family. RutA subfamily.

The catalysed reaction is uracil + FMNH2 + NADH + O2 = (Z)-3-ureidoacrylate + FMN + NAD(+) + H2O + H(+). It carries out the reaction thymine + FMNH2 + NADH + O2 = (Z)-2-methylureidoacrylate + FMN + NAD(+) + H2O + H(+). Catalyzes the pyrimidine ring opening between N-3 and C-4 by an unusual flavin hydroperoxide-catalyzed mechanism, adding oxygen atoms in the process to yield ureidoacrylate peracid, that immediately reacts with FMN forming ureidoacrylate and FMN-N(5)-oxide. The FMN-N(5)-oxide reacts spontaneously with NADH to produce FMN. Requires the flavin reductase RutF to regenerate FMN in vivo. In Escherichia coli (strain 55989 / EAEC), this protein is Pyrimidine monooxygenase RutA.